A 64-amino-acid chain; its full sequence is Large ribosomal subunit protein uL29 (64 aa).

Belongs to the universal ribosomal protein uL29 family.

The protein is Large ribosomal subunit protein uL29 of Nitratiruptor sp. (strain SB155-2).